The sequence spans 251 residues: Triosephosphate isomerase (251 aa).

2 residues coordinate substrate: Asn-10 and Lys-12. Residue His-95 is the Electrophile of the active site. The Proton acceptor role is filled by Glu-167.

This sequence belongs to the triosephosphate isomerase family. Homodimer.

The catalysed reaction is D-glyceraldehyde 3-phosphate = dihydroxyacetone phosphate. It participates in carbohydrate biosynthesis; gluconeogenesis. It functions in the pathway carbohydrate degradation; glycolysis; D-glyceraldehyde 3-phosphate from glycerone phosphate: step 1/1. The polypeptide is Triosephosphate isomerase (TPI) (Coprinopsis cinerea (strain Okayama-7 / 130 / ATCC MYA-4618 / FGSC 9003) (Inky cap fungus)).